A 72-amino-acid chain; its full sequence is Translation initiation factor IF-1 1 (72 aa).

Residues 1 to 72 (MSKEDVIQMQ…TKGRIVFRAK (72 aa)) enclose the S1-like domain.

It belongs to the IF-1 family. As to quaternary structure, component of the 30S ribosomal translation pre-initiation complex which assembles on the 30S ribosome in the order IF-2 and IF-3, IF-1 and N-formylmethionyl-tRNA(fMet); mRNA recruitment can occur at any time during PIC assembly.

It is found in the cytoplasm. One of the essential components for the initiation of protein synthesis. Stabilizes the binding of IF-2 and IF-3 on the 30S subunit to which N-formylmethionyl-tRNA(fMet) subsequently binds. Helps modulate mRNA selection, yielding the 30S pre-initiation complex (PIC). Upon addition of the 50S ribosomal subunit IF-1, IF-2 and IF-3 are released leaving the mature 70S translation initiation complex. This is Translation initiation factor IF-1 1 from Thiobacillus denitrificans (strain ATCC 25259 / T1).